A 284-amino-acid chain; its full sequence is Phosphoribosylaminoimidazole-succinocarboxamide synthase (284 aa).

This sequence belongs to the SAICAR synthetase family.

It catalyses the reaction 5-amino-1-(5-phospho-D-ribosyl)imidazole-4-carboxylate + L-aspartate + ATP = (2S)-2-[5-amino-1-(5-phospho-beta-D-ribosyl)imidazole-4-carboxamido]succinate + ADP + phosphate + 2 H(+). The protein operates within purine metabolism; IMP biosynthesis via de novo pathway; 5-amino-1-(5-phospho-D-ribosyl)imidazole-4-carboxamide from 5-amino-1-(5-phospho-D-ribosyl)imidazole-4-carboxylate: step 1/2. The protein is Phosphoribosylaminoimidazole-succinocarboxamide synthase of Chromobacterium violaceum (strain ATCC 12472 / DSM 30191 / JCM 1249 / CCUG 213 / NBRC 12614 / NCIMB 9131 / NCTC 9757 / MK).